The sequence spans 256 residues: 5-keto-4-deoxy-D-glucarate aldolase (256 aa).

Catalysis depends on His50, which acts as the Proton acceptor. Gln151 is a binding site for substrate. Residue Glu153 coordinates Mg(2+). 2 residues coordinate substrate: Ser178 and Asp179. Asp179 contacts Mg(2+).

The protein belongs to the HpcH/HpaI aldolase family. KDGluc aldolase subfamily. Homohexamer; trimer of dimers. It depends on Mg(2+) as a cofactor.

The catalysed reaction is 5-dehydro-4-deoxy-D-glucarate = 2-hydroxy-3-oxopropanoate + pyruvate. It catalyses the reaction 2-dehydro-3-deoxy-D-glucarate = 2-hydroxy-3-oxopropanoate + pyruvate. Its pathway is carbohydrate acid metabolism; galactarate degradation; D-glycerate from galactarate: step 2/3. Functionally, catalyzes the reversible retro-aldol cleavage of both 5-keto-4-deoxy-D-glucarate and 2-keto-3-deoxy-D-glucarate to pyruvate and tartronic semialdehyde. This is 5-keto-4-deoxy-D-glucarate aldolase from Salmonella arizonae (strain ATCC BAA-731 / CDC346-86 / RSK2980).